Here is a 390-residue protein sequence, read N- to C-terminus: Formate-dependent phosphoribosylglycinamide formyltransferase (390 aa).

N(1)-(5-phospho-beta-D-ribosyl)glycinamide contacts are provided by residues 19 to 20 (EL) and glutamate 79. ATP is bound by residues arginine 111, lysine 152, 157-162 (SSGKGQ), 192-195 (EGFV), and glutamate 200. Residues 116-305 (RLAAEELGLP…EFAIHARAIL (190 aa)) enclose the ATP-grasp domain. Mg(2+) contacts are provided by glutamate 264 and glutamate 276. Residues aspartate 283, lysine 353, and 360–361 (RR) contribute to the N(1)-(5-phospho-beta-D-ribosyl)glycinamide site.

The protein belongs to the PurK/PurT family. As to quaternary structure, homodimer.

It carries out the reaction N(1)-(5-phospho-beta-D-ribosyl)glycinamide + formate + ATP = N(2)-formyl-N(1)-(5-phospho-beta-D-ribosyl)glycinamide + ADP + phosphate + H(+). The protein operates within purine metabolism; IMP biosynthesis via de novo pathway; N(2)-formyl-N(1)-(5-phospho-D-ribosyl)glycinamide from N(1)-(5-phospho-D-ribosyl)glycinamide (formate route): step 1/1. Its function is as follows. Involved in the de novo purine biosynthesis. Catalyzes the transfer of formate to 5-phospho-ribosyl-glycinamide (GAR), producing 5-phospho-ribosyl-N-formylglycinamide (FGAR). Formate is provided by PurU via hydrolysis of 10-formyl-tetrahydrofolate. The protein is Formate-dependent phosphoribosylglycinamide formyltransferase of Marinobacter nauticus (strain ATCC 700491 / DSM 11845 / VT8) (Marinobacter aquaeolei).